A 426-amino-acid polypeptide reads, in one-letter code: Gamma-glutamyl phosphate reductase (426 aa).

It belongs to the gamma-glutamyl phosphate reductase family.

The protein resides in the cytoplasm. It catalyses the reaction L-glutamate 5-semialdehyde + phosphate + NADP(+) = L-glutamyl 5-phosphate + NADPH + H(+). It participates in amino-acid biosynthesis; L-proline biosynthesis; L-glutamate 5-semialdehyde from L-glutamate: step 2/2. Its function is as follows. Catalyzes the NADPH-dependent reduction of L-glutamate 5-phosphate into L-glutamate 5-semialdehyde and phosphate. The product spontaneously undergoes cyclization to form 1-pyrroline-5-carboxylate. This is Gamma-glutamyl phosphate reductase from Acidovorax ebreus (strain TPSY) (Diaphorobacter sp. (strain TPSY)).